Reading from the N-terminus, the 163-residue chain is Gas vesicle protein H2 (163 aa).

Positions 57–92 (LGSDARSPSTPAGNADDAGDAETAHIETRASDDSDD) are disordered. Residues 78–88 (ETAHIETRASD) show a composition bias toward basic and acidic residues.

It belongs to the gas vesicle GvpH family. As to quaternary structure, gvpF to GvpM interact with each other in vitro, and may form multi-subunit complex(es). Interacts with GvpC. Might interact with GvpA.

The protein resides in the gas vesicle. Its subcellular location is the cytoplasm. In terms of biological role, a minor component of the gas vesicle, also found in soluble extracts. Proteins GvpF to GvpM might be involved in nucleating gas vesicle formation. Gas vesicles are hollow, gas filled proteinaceous nanostructures found in several microbial planktonic microorganisms. They allow positioning of halobacteria at the optimal depth for growth in the poorly aerated, shallow brine pools of their habitat. Functionally, expression of 2 c-vac DNA fragments containing 2 divergently transcribed regions (gvpE-gvpF-gvpG-gvpH-gvpI-gvpJ-gvpK-gvpL-gvpM and gvpA-gvpC-gvpN-gvpO) allows H.volcanii to produce gas vesicles. The sequence is that of Gas vesicle protein H2 from Halobacterium salinarum (strain ATCC 700922 / JCM 11081 / NRC-1) (Halobacterium halobium).